The sequence spans 5141 residues: SCO-spondin (5141 aa).

An N-terminal signal peptide occupies residues 1 to 17 (MLLPALLFGMLWAPANG). The EMI domain occupies 18–102 (HWCEQIETVH…ACCPGWGGIH (85 aa)). N-linked (GlcNAc...) asparagine glycosylation is found at Asn-88, Asn-130, Asn-150, and Asn-167. The 172-residue stretch at 193 to 364 (ATCATWSGFH…RLPGYEPGCL (172 aa)) folds into the VWFD 1 domain. 3 disulfide bridges follow: Cys-195-Cys-325, Cys-217-Cys-363, and Cys-239-Cys-245. The TIL 1 domain occupies 472-527 (CPGGQLYSDCISSCPPSCSAVAQGEEGSCGKECVSGCECPTGLFWDGALCVPAAHC). The VWFD 2 domain maps to 565–738 (AECAVGGDGH…FQVSGDGRCP (174 aa)). Intrachain disulfides connect Cys-567/Cys-700 and Cys-591/Cys-737. 2 N-linked (GlcNAc...) asparagine glycosylation sites follow: Asn-657 and Asn-822. The region spanning 830–883 (CPGGQVYQECAPACGHYCGEPEDCKELGSCVAGCNCPPGLLWDLEGQCVPPSMC) is the TIL 2 domain. Asn-895, Asn-949, and Asn-991 each carry an N-linked (GlcNAc...) asparagine glycan. Residues 1017–1187 (GWCQASGAPH…HSWRLNPLCP (171 aa)) enclose the VWFD 3 domain. 3 cysteine pairs are disulfide-bonded: Cys-1019-Cys-1151, Cys-1041-Cys-1186, and Cys-1062-Cys-1069. The 57-residue stretch at 1280–1336 (CEGGQVYEPCGSTCPPTCHDHHPELRWHCQAITCVEGCFCPEGTLLHGGTCVELTDC) folds into the TIL 3 domain. Residue Asn-1357 is glycosylated (N-linked (GlcNAc...) asparagine). LDL-receptor class A domains are found at residues 1380–1417 (GCAEGEALCRESGHCVPLEWLCDNQDDCGDGSDEEGCD), 1420–1456 (VCGEGQMSCQSGRCLPLSLICDGQDDCGDGTDEQGCL), 1456–1492 (LCPQGFLACADGRCLPPALLCDGHPDCLDAADEESCL), and 1496–1534 (SCTSGEVSCVDGPCIRTIQLCDGVWDCPDGADEGPVHCS). Cystine bridges form between Cys-1381/Cys-1394, Cys-1388/Cys-1407, Cys-1401/Cys-1416, Cys-1421/Cys-1433, Cys-1428/Cys-1446, Cys-1440/Cys-1455, Cys-1457/Cys-1469, Cys-1464/Cys-1482, Cys-1476/Cys-1491, Cys-1497/Cys-1509, Cys-1504/Cys-1522, and Cys-1516/Cys-1533. A disordered region spans residues 1533 to 1567 (CSSPSLPTPPAGIGQNPSTSSPDTSPSPVGSASPA). Over residues 1549-1567 (PSTSSPDTSPSPVGSASPA) the composition is skewed to low complexity. 2 consecutive LDL-receptor class A domains span residues 1569–1605 (PCSLSEFQCNSGECTPRGWRCDREEDCTDGSDELDCG) and 1607–1646 (PCKLYQMPCAHGPHCLSPGQLCDGVAQCPDGSDEDPDVCE). Cystine bridges form between Cys-1570/Cys-1582, Cys-1577/Cys-1595, Cys-1589/Cys-1604, Cys-1608/Cys-1621, Cys-1615/Cys-1634, and Cys-1628/Cys-1645. 2 N-linked (GlcNAc...) asparagine glycosylation sites follow: Asn-1655 and Asn-1668. The LDL-receptor class A 7 domain occupies 1660-1700 (PCPEFSCPNGTCIDFLLVCDGSPDCELADETEPSLDEQGCG). Disulfide bonds link Cys-1661–Cys-1671, Cys-1666–Cys-1684, Cys-1678–Cys-1699, Cys-1711–Cys-1747, Cys-1715–Cys-1752, Cys-1726–Cys-1737, Cys-1767–Cys-1964, Cys-1771–Cys-1969, and Cys-1781–Cys-1791. 2 TSP type-1 domains span residues 1699–1753 (CGTW…EACP) and 1755–1970 (DGEW…EPCE). N-linked (GlcNAc...) asparagine glycosylation occurs at Asn-1725. Residue Asn-1814 is glycosylated (N-linked (GlcNAc...) asparagine). 2 consecutive EGF-like domains span residues 1829–1868 (CPLTCDDISGEAVCSPDRPCSSPGCWCPEGKVLGTEGRCV) and 1869–1895 (RPRQCPCLVDGIRYWPGQRIKMDCQLC). The 61-residue stretch at 1970–2030 (EGCEQWGLTY…GMGESCCHCA (61 aa)) folds into the VWFC 1 domain. N-linked (GlcNAc...) asparagine glycosylation is present at Asn-2035. Cystine bridges form between Cys-2070-Cys-2226, Cys-2236-Cys-2248, Cys-2243-Cys-2261, and Cys-2255-Cys-2270. The 157-residue stretch at 2070 to 2226 (CYSPLGLAGL…IFLWVELLGC (157 aa)) folds into the F5/8 type C domain. The tract at residues 2087-2109 (PLEHSTRAAPVEAPTAGPGPRED) is disordered. Asn-2130 and Asn-2148 each carry an N-linked (GlcNAc...) asparagine glycan. The 37-residue stretch at 2235–2271 (LCPGTRHRCANGDCALKGGPCDGAVDCEDGSDEEGCG) folds into the LDL-receptor class A 8 domain. Residues 2262-2335 (EDGSDEEGCG…SPSASEGLLP (74 aa)) form a disordered region. Residues 2276 to 2294 (STASRVHSTARTPALSPTQ) are compositionally biased toward polar residues. Basic and acidic residues predominate over residues 2301-2314 (HPREGLADMEHQQP). LDL-receptor class A domains follow at residues 2391–2427 (RCGPGQVPCDVLGCVEQEQLCDGREDCLDGSDEQHCA) and 2448–2484 (LCSPSQLSCGSGECLPLEHRCDLQVNCQDGSDEDDCV). 12 cysteine pairs are disulfide-bonded: Cys-2392–Cys-2404, Cys-2399–Cys-2417, Cys-2411–Cys-2426, Cys-2449–Cys-2461, Cys-2456–Cys-2474, Cys-2468–Cys-2483, Cys-2486–Cys-2522, Cys-2497–Cys-2501, Cys-2532–Cys-2537, Cys-2552–Cys-2589, Cys-2556–Cys-2594, and Cys-2567–Cys-2579. 2 consecutive TSP type-1 domains span residues 2485-2538 (DCVL…QACP) and 2540-2595 (AGAW…QLCP). A TIL 4 domain is found at 2618–2660 (PPCPPSCLDPEANRSCSGHCVEGCRCPPGLFLQDSHCLPLSEC). Residues Asn-2630 and Asn-2679 are each glycosylated (N-linked (GlcNAc...) asparagine). TSP type-1 domains lie at 2700-2754 (SCGW…TDCG), 2758-2813 (PGWT…SLCP), and 2815-2868 (PSAW…HPCT). 9 cysteine pairs are disulfide-bonded: Cys-2701/Cys-2739, Cys-2712/Cys-2716, Cys-2749/Cys-2753, Cys-2769/Cys-2807, Cys-2773/Cys-2812, Cys-2789/Cys-2797, Cys-2827/Cys-2862, Cys-2831/Cys-2867, and Cys-2842/Cys-2852. N-linked (GlcNAc...) asparagine glycans are attached at residues Asn-2921 and Asn-2951. TSP type-1 domains follow at residues 2969–3024 (ACGW…RPCQ) and 3025–3068 (GPGA…QPCA). 3 cysteine pairs are disulfide-bonded: Cys-2970-Cys-3008, Cys-2981-Cys-2985, and Cys-3018-Cys-3023. Residues Asn-3046, Asn-3101, Asn-3148, and Asn-3158 are each glycosylated (N-linked (GlcNAc...) asparagine). Positions 3075-3127 (CPKDQQWLDCAQGPASCAHLSTPREANQTCHPGCYCLSGMLLLNNVCVPAQDC) constitute a TIL 5 domain. TSP type-1 domains follow at residues 3168–3235 (QPAW…PGCN) and 3237–3292 (AGVW…QPCP). 6 cysteine pairs are disulfide-bonded: Cys-3180–Cys-3229, Cys-3184–Cys-3234, Cys-3195–Cys-3219, Cys-3249–Cys-3286, Cys-3253–Cys-3291, and Cys-3264–Cys-3276. N-linked (GlcNAc...) asparagine glycosylation is present at Asn-3295. The TIL 6 domain maps to 3300-3350 (EGAEYSPCGPPCPRSCDDLVHCMWHCQPGCYCPPGKVLSADGAICVQPHHC). Asn-3384 carries N-linked (GlcNAc...) asparagine glycosylation. TSP type-1 domains lie at 3393–3455 (SGDW…TACP) and 3457–3512 (DGAW…TPCT). 6 cysteine pairs are disulfide-bonded: Cys-3405–Cys-3448, Cys-3409–Cys-3454, Cys-3420–Cys-3432, Cys-3469–Cys-3504, Cys-3472–Cys-3511, and Cys-3482–Cys-3494. The N-linked (GlcNAc...) asparagine glycan is linked to Asn-3506. Positions 3514 to 3570 (CGGGQDLLPCGQPCPHSCQDLSLGSTCQPGSSGCQSGCGCPPGQLSQDGLCVFPADC) constitute a TIL 7 domain. 2 N-linked (GlcNAc...) asparagine glycosylation sites follow: Asn-3584 and Asn-3611. One can recognise a TSP type-1 14 domain in the interval 3630 to 3678 (PGIWSSWGPWEKCSVPCGGGEQLRSRQCARPPCPGLAQQSRTCHIHVCR). Intrachain disulfides connect Cys-3642–Cys-3672, Cys-3646–Cys-3677, and Cys-3657–Cys-3662. Residue Asn-3787 is glycosylated (N-linked (GlcNAc...) asparagine). TSP type-1 domains follow at residues 3806–3862 (RGYF…PECP), 3876–3928 (AGGW…PSCT), 3942–3998 (NCFW…RACP), and 4000–4055 (PGGW…MPCE). Intrachain disulfides connect Cys-3818/Cys-3856, Cys-3822/Cys-3861, and Cys-3834/Cys-3846. N-linked (GlcNAc...) asparagine glycosylation is present at Asn-3910. Cystine bridges form between Cys-3943/Cys-3979, Cys-3954/Cys-3958, Cys-3992/Cys-3997, Cys-4012/Cys-4049, Cys-4016/Cys-4054, and Cys-4027/Cys-4039. The TIL 8 domain maps to 4058–4113 (CPAGMEMVSCANRCPYSCSDLQEAVMCQEDQACQLGCRCSEGFLEQDGGCVPVGHC). Asn-4135 carries an N-linked (GlcNAc...) asparagine glycan. 4 consecutive TSP type-1 domains span residues 4155–4208 (HCAW…DPCP), 4249–4304 (PGGW…QLCL), 4306–4362 (LLEI…GPCQ), and 4364–4418 (DCMW…GNCS). 6 cysteine pairs are disulfide-bonded: Cys-4156-Cys-4192, Cys-4167-Cys-4171, Cys-4202-Cys-4207, Cys-4261-Cys-4298, Cys-4265-Cys-4303, and Cys-4276-Cys-4288. The N-linked (GlcNAc...) asparagine glycan is linked to Asn-4345. Disulfide bonds link Cys-4365/Cys-4402, Cys-4376/Cys-4378, and Cys-4412/Cys-4417. Asn-4416 carries an N-linked (GlcNAc...) asparagine glycan. The TIL 9 domain occupies 4422–4477 (CLPPFEFQSCGSPCAGLCATHLSHQLCQDLPPCQPGCYCPMGLLEQDGGCILPEQC). Residue Asn-4557 is glycosylated (N-linked (GlcNAc...) asparagine). The TSP type-1 23 domain maps to 4608 to 4659 (TCQWGPWGPWSPCQVPCSGGFKLRWREASDNSVGECRGPWAQTESCNMGSCP). Disulfide bonds link Cys-4609–Cys-4643, Cys-4620–Cys-4624, and Cys-4653–Cys-4658. The region spanning 4673 to 4719 (DCANQCPRSCADLWEGVQCLQGPCSPGCRCPPGQLVQDGHCVPISSC) is the TIL 10 domain. 3 N-linked (GlcNAc...) asparagine glycosylation sites follow: Asn-4727, Asn-4744, and Asn-4749. The 54-residue stretch at 4759–4812 (CPVLGPWSPWSECSAVCGGGTMVRYRSCEEHPDSAPCQALDMEQRVECNLQTCP) folds into the TSP type-1 24 domain. 3 disulfides stabilise this stretch: Cys-4771–Cys-4806, Cys-4775–Cys-4811, and Cys-4786–Cys-4795. A TIL 11 domain is found at 4814–4868 (CPPGQVLSTCATLCPSFCSHLWPGTICVREPCQLGCGCPGGQLLHSGTCIPPEAC). N-linked (GlcNAc...) asparagine glycosylation is found at Asn-4899, Asn-4942, and Asn-4949. In terms of domain architecture, TIL 12 spans 4920–4978 (CPPGEILQLGELRPCEKTCLEMNKTQAWSNCTEAQVPGCVCQLGHFRSHTGLCVPEDHC). The 59-residue stretch at 4978–5036 (CECWHHGSPHLPGSEWQEACESCRCLHGKSVCTQHCPELSCAQGEVVVQEPGSCCPICQ) folds into the VWFC 2 domain. Intrachain disulfides connect Cys-5047–Cys-5095, Cys-5061–Cys-5112, Cys-5071–Cys-5128, and Cys-5075–Cys-5130. The CTCK domain occupies 5047–5134 (CRHLTELRNL…IHNCHCSACQ (88 aa)). Residue Asn-5055 is glycosylated (N-linked (GlcNAc...) asparagine).

The protein belongs to the thrombospondin family.

It is found in the secreted. The protein resides in the extracellular space. Involved in the modulation of neuronal aggregation. May be involved in developmental events during the formation of the central nervous system. This chain is SCO-spondin, found in Rattus norvegicus (Rat).